The chain runs to 3175 residues: Replicase polyprotein 1ab (3175 aa).

The segment at 25 to 44 (CEHGAGLCCEVDGSTLCAEC) adopts a C4-type; atypical zinc-finger fold. Positions 66-156 (SPVPVGHKFL…PAANSLIVTT (91 aa)) constitute a Peptidase C31 domain. Residues 157–260 (DQEQDGFCWL…WSCLPAGNYG (104 aa)) enclose the Peptidase C32 domain. Catalysis depends on for Nsp1 papain-like cysteine proteinase activity residues cysteine 164 and histidine 230. The interval 261-339 (GYNPPGDGAC…KQHWRVKRAK (79 aa)) is OTU-like. The Peptidase C33 domain maps to 261–360 (GYNPPGDGAC…RGICNCQRMS (100 aa)). Cysteine 270 serves as the catalytic For Nsp2 cysteine proteinase activity. A Zn(2+)-binding site is contributed by cysteine 319. Residue histidine 332 is the For Nsp2 cysteine proteinase activity of the active site. Positions 349, 354, and 356 each coordinate Zn(2+). Positions 386-451 (VVTPEGQPRP…TRLQGASTQE (66 aa)) are disordered. The next 7 helical transmembrane spans lie at 530–550 (AVIA…SFAI), 551–571 (GLIP…SSAN), 625–645 (FDAA…ILYL), 829–849 (LIGG…STFT), 903–923 (YWIA…RLAI), 935–955 (LVLL…SLAG), and 977–997 (LVTM…LMGL). An HD1 region spans residues 530 to 645 (AVIACLLPIW…DLCSFAILYL (116 aa)). The segment at 829-997 (LIGGWIYGIC…ALAVYSLMGL (169 aa)) is HD2. Positions 1065–1268 (GLFRSPKARG…MLIDGLSNRE (204 aa)) constitute a Peptidase S32 domain. Residues histidine 1103, aspartate 1129, and serine 1184 each act as charge relay system; for 3C-like serine proteinase activity in the active site. Helical transmembrane passes span 1291–1311 (AYLP…KSVG), 1333–1353 (CLFH…WFYI), 1355–1375 (AAGT…MLFV), and 1385–1405 (GWAI…AALG). Positions 1291–1405 (AYLPYVLGFF…SITMLAAALG (115 aa)) are HD3. Asparagine 1501 is a glycosylation site (N-linked (GlcNAc...) asparagine; by host). Positions 1577-1614 (NDTPVKPMPSRRRRKGLPKGAQLEWDRHQEEKRNAGDD) are disordered. A compositionally biased stretch (basic and acidic residues) spans 1600–1612 (EWDRHQEEKRNAG). A NiRAN domain is found at 1716 to 1883 (LANPVEAVNQ…DKVAAAVSGD (168 aa)). The RdRp catalytic domain maps to 2116 to 2251 (KYCLETDLES…TTPNQHYAAS (136 aa)). One can recognise an AV ZBD domain in the interval 2371–2438 (SAVCTVCGAA…SPKQMVPKVP (68 aa)). Zn(2+) contacts are provided by cysteine 2374, cysteine 2377, cysteine 2387, cysteine 2392, cysteine 2395, histidine 2399, histidine 2402, cysteine 2403, cysteine 2412, histidine 2414, cysteine 2423, and cysteine 2426. The region spanning 2496 to 2661 (PGSHIAVPLQ…LRHFVSLEPL (166 aa)) is the (+)RNA virus helicase ATP-binding domain. 2528–2535 (GPPGSGKT) contacts ATP. Residues 2662–2793 (RVCHRFGAAV…PPTACHLGQE (132 aa)) enclose the (+)RNA virus helicase C-terminal domain. The AV-Nsp11N/CoV-Nsp15M domain maps to 2840–2930 (KISCLPRVAQ…LTEWVDGKAR (91 aa)). Residues 2932–3054 (LPDSLFSSGR…MVWRNATFYV (123 aa)) enclose the NendoU domain. Active-site residues include histidine 2963, histidine 2978, and lysine 3007.

Belongs to the arteriviridae polyprotein family. As to quaternary structure, nsp1 interacts with cellular transcription cofactor SND1/p100. Post-translationally, specific enzymatic cleavages in vivo by its own proteases yield mature proteins. There are two alternative pathways for processing. Either nsp4-5 is cleaved, which represents the major pathway or the nsp5-6 and nsp6-7 are processed, which represents the minor pathway. The major pathway occurs when nsp2 acts as a cofactor for nsp4.

Its subcellular location is the host nucleus. It localises to the host cytoplasm. It is found in the host membrane. The protein resides in the host perinuclear region. The catalysed reaction is RNA(n) + a ribonucleoside 5'-triphosphate = RNA(n+1) + diphosphate. The enzyme catalyses ATP + H2O = ADP + phosphate + H(+). It carries out the reaction Thiol-dependent hydrolysis of ester, thioester, amide, peptide and isopeptide bonds formed by the C-terminal Gly of ubiquitin (a 76-residue protein attached to proteins as an intracellular targeting signal).. It catalyses the reaction uridylyl-uridylyl-ribonucleotide-RNA = a 3'-end uridylyl-2',3'-cyclophospho-uridine-RNA + a 5'-end dephospho-ribonucleoside-RNA. In terms of biological role, the replicase polyprotein 1ab is a multifunctional protein: it contains the activities necessary for the transcription of negative stranded RNA, leader RNA, subgenomic mRNAs and progeny virion RNA as well as proteinases responsible for the cleavage of the polyprotein into functional products. Functionally, nsp1 is essential for viral subgenomic mRNA synthesis. Nsp2 cysteine proteinase which cleaves the nsp2/nsp3 site in the polyprotein. Also displays deubiquitinating and deISGylase activities. The deubiquitinating activity cleaves both ubiquitinated and ISGylated products and may therefore regulate ubiquitin and ISG15 dependent host innate immunity. Its function is as follows. The 3C-like serine proteinase chain is responsible for the majority of cleavages as it cleaves the C-terminus of the polyprotein. In terms of biological role, the helicase chain, which contains a zinc finger structure, displays RNA and DNA duplex-unwinding activities with 5' to 3' polarity. Functionally, plays a role in viral transcription/replication and prevents the simultaneous activation of host cell dsRNA sensors, such as MDA5/IFIH1, OAS, and PKR. Acts by degrading the 5'-polyuridines generated during replication of the poly(A) region of viral genomic and subgenomic RNAs. Catalyzes a two-step reaction in which a 2'3'-cyclic phosphate (2'3'-cP) is first generated by 2'-O transesterification, which is then hydrolyzed to a 3'-phosphate (3'-P). If not degraded, poly(U) RNA would hybridize with poly(A) RNA tails and activate host dsRNA sensors. The polypeptide is Replicase polyprotein 1ab (rep) (Equidae (horses)).